The primary structure comprises 826 residues: Homeobox-leucine zipper protein HDG5 (826 aa).

Disordered stretches follow at residues 1–34 (MLTM…IQNP) and 69–119 (EMME…HRHT). Over residues 23 to 34 (PSSSSPGTIQNP) the composition is skewed to low complexity. Residues 88-105 (EDPKFGNESDVNELHDDE) are compositionally biased toward basic and acidic residues. Over residues 110–119 (AKKKRYHRHT) the composition is skewed to basic residues. The segment at residues 111–170 (KKKRYHRHTNRQIQEMEALFKENPHPDDKQRKRLSAELGLKPRQVKFWFQNRRTQMKAQQ) is a DNA-binding region (homeobox). Positions 165-189 (QMKAQQDRNENVMLRAENDNLKSEN) form a coiled coil. Positions 314–558 (ADEEKVIAME…LQRQCERIAS (245 aa)) constitute an START domain.

Belongs to the HD-ZIP homeobox family. Class IV subfamily. In terms of tissue distribution, expressed in shoot apical meristem (SAM) with higher levels in L1 cells and the epidermal layer of young leaves. Expressed in the L1 of apical inflorescence meristems, early flower primordia, carpel and stamen filament epidermis, ovule primordia, nucellus and chalaze.

The protein localises to the nucleus. Its function is as follows. Probable transcription factor. Involved, together with PDF2, in the regulation of flower organs development by promoting the expression of APETALA 3 (AP3) in the epidermis and internal cell layers of developing flowers. This is Homeobox-leucine zipper protein HDG5 from Arabidopsis thaliana (Mouse-ear cress).